The following is a 212-amino-acid chain: Kynurenine formamidase (212 aa).

Residue Trp18 coordinates substrate. Residues His48, His52, and Asp54 each contribute to the Zn(2+) site. His58 serves as the catalytic Proton donor/acceptor. Residues His160 and Glu172 each coordinate Zn(2+).

It belongs to the Cyclase 1 superfamily. KynB family. Homodimer. Zn(2+) serves as cofactor.

It carries out the reaction N-formyl-L-kynurenine + H2O = L-kynurenine + formate + H(+). Its pathway is amino-acid degradation; L-tryptophan degradation via kynurenine pathway; L-kynurenine from L-tryptophan: step 2/2. Its function is as follows. Catalyzes the hydrolysis of N-formyl-L-kynurenine to L-kynurenine, the second step in the kynurenine pathway of tryptophan degradation. The protein is Kynurenine formamidase of Paraburkholderia phytofirmans (strain DSM 17436 / LMG 22146 / PsJN) (Burkholderia phytofirmans).